A 575-amino-acid chain; its full sequence is MILLQTSLIWVVYAVVVVVLFAVASVFIYVYQSPRDRSPSVTLTCIVAITSLLATILLLPVDVALVSSTVSSSVGQRKDWATPEVVDRITFSLTLVYYILYSLDILLCLLVVPFVYFWYEEYDEVAAQTGEQSSGQRFWGASKYTLSFIAILIILFLVGVFVPISRANGGNGLDPFKSLLGENRGERALTFALGLLITIGMYVYALHTSTGLAVLPIRLIKGGPRLSNAGSWNATFTVQLDSNRERRRQLEGRCGGNFDHLSSKDRRELDALIREERTLIRRQRLAQEADGKGNALLPRMWFRLEAFFRPFRRLVGLILLLLVLLIWVSMILTASDKAKNSICKRHCGYVLGHINIFNPINEIFVQSAKLFPIDYAIFTMLVLLLFFGTVVGIATVGIRFLWISIFRIRLGHTSPQALLVMTAILMLSILALNYSISMIVAPQYATFGPQTFCDRLSGSSVLPELQCVVKRCSEAFGSDAAKKVCTPSVASTVLNRVTVSFPFFGAIFFWSQFAFIGVYLLALITSLLRSPKLDEQQLDEDAEEAEEEALLSGSRRNMDDRWQSIVGRASRSEDT.

5 consecutive transmembrane segments (helical) span residues Leu-8–Ile-28, Ile-46–Val-66, Leu-95–Val-115, Tyr-144–Ile-164, and Ala-188–Thr-208. Asn-233 is a glycosylation site (N-linked (GlcNAc...) asparagine). Helical transmembrane passes span Leu-314 to Ala-334, Ala-376 to Val-396, Val-420 to Val-440, and Phe-504 to Ile-524. Positions Gln-537 to Ala-549 are enriched in acidic residues. Residues Gln-537–Arg-556 are disordered.

This sequence belongs to the LIMR family. LMBRD1 subfamily.

It is found in the lysosome membrane. In terms of biological role, probable lysosomal cobalamin transporter. Required to export cobalamin from lysosomes allowing its conversion to cofactors. This is Probable lysosomal cobalamin transporter from Emericella nidulans (strain FGSC A4 / ATCC 38163 / CBS 112.46 / NRRL 194 / M139) (Aspergillus nidulans).